A 607-amino-acid chain; its full sequence is Elongation factor 4 (607 aa).

A tr-type G domain is found at 11-193 (ENIRNFSIIA…KIVEVVPAPD (183 aa)). GTP is bound by residues 23–28 (DHGKST) and 140–143 (NKID).

It belongs to the TRAFAC class translation factor GTPase superfamily. Classic translation factor GTPase family. LepA subfamily.

Its subcellular location is the cell membrane. It catalyses the reaction GTP + H2O = GDP + phosphate + H(+). Required for accurate and efficient protein synthesis under certain stress conditions. May act as a fidelity factor of the translation reaction, by catalyzing a one-codon backward translocation of tRNAs on improperly translocated ribosomes. Back-translocation proceeds from a post-translocation (POST) complex to a pre-translocation (PRE) complex, thus giving elongation factor G a second chance to translocate the tRNAs correctly. Binds to ribosomes in a GTP-dependent manner. This chain is Elongation factor 4, found in Staphylococcus aureus (strain USA300).